The following is a 614-amino-acid chain: Beta-glucosidase 33 (614 aa).

Positions 1–26 (MATATLTLFLGLLALTSTILSFNADA) are cleaved as a signal peptide. A beta-D-glucoside is bound by residues Q113, H217, and 262–263 (NE). E263 serves as the catalytic Proton donor. Cysteines 282 and 290 form a disulfide. N344 carries an N-linked (GlcNAc...) asparagine glycan. Residue Y407 participates in a beta-D-glucoside binding. N-linked (GlcNAc...) asparagine glycosylation is found at N419, N432, and N439. E479 contributes to the a beta-D-glucoside binding site. The active-site Nucleophile is the E479. N491 is a glycosylation site (N-linked (GlcNAc...) asparagine). Residues W529, 536–537 (EW), and F545 contribute to the a beta-D-glucoside site.

It belongs to the glycosyl hydrolase 1 family.

It catalyses the reaction Hydrolysis of terminal, non-reducing beta-D-glucosyl residues with release of beta-D-glucose.. This is Beta-glucosidase 33 from Arabidopsis thaliana (Mouse-ear cress).